The sequence spans 1384 residues: Protein Gawky (1384 aa).

Disordered regions lie at residues 1–99 (MREA…VWTG), 148–227 (NGSS…DPRG), 263–335 (TAST…DDGT), and 447–501 (VGAP…SGWS). Positions 1–205 (MREALFSQDG…HRGGNGSGAT (205 aa)) are required for interaction with AGO1. 2 sufficient for miRNA-mediated silencing regions span residues 1 to 605 (MREA…SLGS) and 605 to 830 (SYAD…SVHL). Over residues 15-24 (HVNQDTNWEV) the composition is skewed to polar residues. The segment covering 150 to 171 (SSNITGSSGVATGSSGNSSNAG) has biased composition (low complexity). The tract at residues 205-490 (TSSDPRDIRM…GVSWGNKQSK (286 aa)) is minimal N-terminal region required for miRNA-mediated silencing. A compositionally biased stretch (basic and acidic residues) spans 208–225 (DPRDIRMIDPRDPIRGDP). 2 stretches are compositionally biased toward polar residues: residues 449–475 (APSS…NSWS) and 485–501 (GNKQ…SGWS). In terms of domain architecture, UBA spans 547–588 (IIKQSKQYRILVENGFKKEDVERALVIANMNIEEAADMLRAN). Disordered regions lie at residues 607 to 626 (ADHN…PVNS), 809 to 841 (QNMQ…LRGH), 889 to 942 (TEFS…NKDW), 962 to 1022 (EPGK…LSSS), 1052 to 1102 (TSPL…GVQT), 1188 to 1221 (SENE…GVGT), and 1318 to 1368 (GTAN…PSGR). Residues 809 to 826 (QNMQPTSQQQQPQQQQLP) are compositionally biased toward low complexity. The interval 862–1115 (YQGASNQQSR…NWTGGNTTWG (254 aa)) is not required for interaction with AGO1 or miRNAs or for localization to P-bodies but necessary for miRNA-mediated silencing and for interaction with pAbp. The span at 898-924 (TKQNLTANTSNINSLGLQNDSTWSTGR) shows a compositional bias: polar residues. A sufficient for miRNA-mediated silencing region spans residues 940 to 1215 (KDWSVAQPTS…TSSSGTSGGN (276 aa)). Residues 1010–1022 (SPTDLPPLSLSSS) show a composition bias toward low complexity. The segment covering 1052–1061 (TSPLNKSSSR) has biased composition (polar residues). Residues 1068-1084 (TANSNKSANSNASTPTT) show a composition bias toward low complexity. One can recognise an RRM domain in the interval 1117–1189 (SWLLLKNLTA…TTIFAESPSE (73 aa)). Residues 1188 to 1203 (SENEVQSIMQHLPQTP) are compositionally biased toward polar residues. The segment at 1200-1384 (PQTPSSTSSS…ISLVYSIVDD (185 aa)) is not required for interaction with AGO1 or miRNAs or for localization to P-bodies but necessary for miRNA-mediated silencing, dissociation from AGO1 and miRNAs and interaction with pAbp. Residues 1211 to 1220 (TSGGNVGGVG) show a composition bias toward gly residues. A compositionally biased stretch (low complexity) spans 1318-1349 (GTANSSGSKSSANNLASGQSSASNLTNSTNST). Positions 1350–1365 (WRQTSQNQALQSQSRP) are enriched in polar residues.

This sequence belongs to the GW182 family. As to quaternary structure, component of the miRNA-directed RNA-induced silencing complex (miRISC), composed of at least AGO1 and gw, which bind mature miRNAs and targets the selective destruction of homologous RNAs. Interacts (via N-terminal region) with AGO1 (via Piwi domain); the interaction is essential for localization of AGO1 in P-bodies and for miRNA-mediated silencing. Interacts with pAbp/PABPC1; this interaction interferes with the binding of pAbp to eIF4G and is required for miRNA-mediated silencing. Interacts with CCR4-NOT complex members Not1, Rga/NOT2, twin/CCR4, Pop2 and NOT3/5 and with PAN complex members CG8232/PAN2 and CG11486/PAN3.

The protein resides in the cytoplasm. The protein localises to the P-body. In terms of biological role, required for gene silencing mediated by micro-RNAs (miRNAs). Silences both polyadenylated and deadenylated mRNAs. Required for miRNA-mediated translational repression and mRNA decay. Not required for miRNA target recognition. Necessary to initiate but not to maintain silencing. Promotes mRNA deadenylation through the recruitment of the CCR4-NOT and PAN complexes and promotes decapping by the DCP1-DCP2 complex. Dissociates from silenced mRNAs after deadenylation. Required for completion of nuclear divisions during early embryonic development. This chain is Protein Gawky, found in Drosophila melanogaster (Fruit fly).